Here is an 83-residue protein sequence, read N- to C-terminus: Small ribosomal subunit protein bS20 (83 aa).

This sequence belongs to the bacterial ribosomal protein bS20 family.

Functionally, binds directly to 16S ribosomal RNA. The sequence is that of Small ribosomal subunit protein bS20 from Flavobacterium johnsoniae (strain ATCC 17061 / DSM 2064 / JCM 8514 / BCRC 14874 / CCUG 350202 / NBRC 14942 / NCIMB 11054 / UW101) (Cytophaga johnsonae).